Consider the following 79-residue polypeptide: Small ribosomal subunit protein uS17 (79 aa).

Belongs to the universal ribosomal protein uS17 family. As to quaternary structure, part of the 30S ribosomal subunit.

One of the primary rRNA binding proteins, it binds specifically to the 5'-end of 16S ribosomal RNA. This Roseobacter denitrificans (strain ATCC 33942 / OCh 114) (Erythrobacter sp. (strain OCh 114)) protein is Small ribosomal subunit protein uS17.